The chain runs to 120 residues: Large ribosomal subunit protein uL18 (120 aa).

Belongs to the universal ribosomal protein uL18 family. In terms of assembly, part of the 50S ribosomal subunit; part of the 5S rRNA/L5/L18/L25 subcomplex. Contacts the 5S and 23S rRNAs.

Functionally, this is one of the proteins that bind and probably mediate the attachment of the 5S RNA into the large ribosomal subunit, where it forms part of the central protuberance. The sequence is that of Large ribosomal subunit protein uL18 from Macrococcus caseolyticus (strain JCSC5402) (Macrococcoides caseolyticum).